Consider the following 66-residue polypeptide: DNA gyrase inhibitor YacG (66 aa).

Positions 10, 13, 29, and 33 each coordinate Zn(2+). A disordered region spans residues 46–66; the sequence is KRIPSDVQITDSDEWSDETRY. The segment covering 56–66 has biased composition (acidic residues); the sequence is DSDEWSDETRY.

This sequence belongs to the DNA gyrase inhibitor YacG family. Interacts with GyrB. The cofactor is Zn(2+).

Its function is as follows. Inhibits all the catalytic activities of DNA gyrase by preventing its interaction with DNA. Acts by binding directly to the C-terminal domain of GyrB, which probably disrupts DNA binding by the gyrase. The polypeptide is DNA gyrase inhibitor YacG (Sodalis glossinidius (strain morsitans)).